Reading from the N-terminus, the 133-residue chain is MASGQQERSELDRMAREGETVVPGGTGGKTLEAQEHLAEGRSRGGQTRKDQLGEEGYREMGHKGGETRKEQLGEEGYREMGHKGGETRKEQMGEEGYHEMGRKGGLSTMEESGGERAAREGIDIDESKFKTKS.

Positions 1 to 133 are disordered; it reads MASGQQERSE…IDESKFKTKS (133 aa). Composition is skewed to basic and acidic residues over residues 7–19, 32–102, and 113–133; these read ERSE…REGE, EAQE…EMGR, and GGER…KTKS. 3 repeat units span residues 24-43, 44-63, and 64-83. A 3 X 20 AA tandem repeats region spans residues 24 to 83; the sequence is GGTGGKTLEAQEHLAEGRSRGGQTRKDQLGEEGYREMGHKGGETRKEQLGEEGYREMGHK.

It belongs to the small hydrophilic plant seed protein family.

In terms of biological role, lea proteins are late embryonic proteins abundant in higher plant seed embryos. The polypeptide is Late embryogenesis abundant protein B19.3 (B19.3) (Hordeum vulgare (Barley)).